Reading from the N-terminus, the 434-residue chain is Serine protease HTRA2, mitochondrial (434 aa).

The segment at 34–65 is disordered; it reads YSNNTANITTDSSSSSNNNSNRNNKNDNNNED. The span at 35–60 shows a compositional bias: low complexity; the sequence is SNNTANITTDSSSSSNNNSNRNNKND. The helical transmembrane segment at 74 to 92 threads the bilayer; that stretch reads LVRFFVPFSLGAVASSLVM. An IAP-binding motif is present at residues 85-88; that stretch reads AVAS. A serine protease region spans residues 151–314; sequence SNGSGFVIEQ…IPIDYVKVFL (164 aa). Catalysis depends on charge relay system residues His169, Asp201, and Ser278. The PDZ domain occupies 337-424; it reads MGITMLTLTP…NMIIMRGVKQ (88 aa).

Belongs to the peptidase S1C family. As to quaternary structure, interacts with th/DIAP1 (via BIR 2 domain).

The protein resides in the mitochondrion intermembrane space. It localises to the mitochondrion membrane. The catalysed reaction is Cleavage of non-polar aliphatic amino-acids at the P1 position, with a preference for Val, Ile and Met. At the P2 and P3 positions, Arg is selected most strongly with a secondary preference for other hydrophilic residues.. In terms of biological role, serine protease that shows proteolytic activity against a non-specific substrate beta-casein. Promotes or induces cell death either by direct binding to and inhibition of BIRC proteins (also called inhibitor of apoptosis proteins, IAPs), leading to an increase in caspase activity, or by a BIRC inhibition-independent, caspase-independent and serine protease activity-dependent mechanism. Can antagonize antiapoptotic activity of th/Diap1 by directly inducing the degradation of th/Diap1. The chain is Serine protease HTRA2, mitochondrial from Drosophila willistoni (Fruit fly).